The chain runs to 516 residues: uncharacterized protein (516 aa).

5 helical membrane-spanning segments follow: residues 10 to 27 (IRYP…GYWI), 32 to 54 (IGAF…GDFA), 64 to 83 (SFLF…PQFV), 95 to 117 (LLAV…ILGL), and 165 to 187 (AVCY…PALL). 2 consecutive RCK C-terminal domains span residues 208-291 (KPGL…SRAE) and 296-376 (RELL…NIGV). 4 helical membrane passes run 386–408 (FVVL…FPVG), 412–430 (IALS…VGHL), 443–465 (GAIS…IHAG), and 480–502 (LLGG…HFVL).

This sequence belongs to the AAE transporter (TC 2.A.81) family.

Its subcellular location is the cell membrane. This is an uncharacterized protein from Bradyrhizobium diazoefficiens (strain JCM 10833 / BCRC 13528 / IAM 13628 / NBRC 14792 / USDA 110).